We begin with the raw amino-acid sequence, 156 residues long: Acyl carrier protein, mitochondrial (156 aa).

The transit peptide at 1 to 68 directs the protein to the mitochondrion; sequence MASRVLSAYV…GRVTQLCRQY (68 aa). The Carrier domain occupies 77–152; the sequence is EGIQDRVLYV…EIVDYIADKK (76 aa). An N6-acetyllysine modification is found at Lys88. An O-(pantetheine 4'-phosphoryl)serine modification is found at Ser112.

Belongs to the acyl carrier protein (ACP) family. In terms of assembly, mammalian complex I is composed of 45 different subunits. Interacts with ETFRF1. Identified in a complex composed of MALSU1, MIEF1 upstream open reading frame protein and NDUFAB1; within the trimeric complex, MIEF1 upstream open reading frame protein functions as a bridging scaffold that interacts with MALSU1 on one side, and with NDUFAB1 on the other side. The complex interacts with the mitochondrial large ribosomal subunit. Interacts with alpha-1-microglobulin chain; this interaction is required for the maintenance of mitochondrial redox homeostasis. Component of the mitochondrial core iron-sulfur cluster (ISC) complex composed of NFS1, LYRM4, NDUFAB1, ISCU, FXN, and FDX2; this complex is a heterohexamer containing two copies of each monomer. Component of the cyteine desulfurase complex composed of NFS1, LYRM4 and NDUFAB1; this complex contributes to the stability and cysteine desulfurase activity of NFS1. In terms of processing, phosphopantetheinylation at Ser-112 is essential for interactions with LYR motif-containing proteins.

The protein localises to the mitochondrion. In terms of biological role, carrier of the growing fatty acid chain in fatty acid biosynthesis. Accessory and non-catalytic subunit of the mitochondrial membrane respiratory chain NADH dehydrogenase (Complex I), which functions in the transfer of electrons from NADH to the respiratory chain. Accessory protein, of the core iron-sulfur cluster (ISC) assembly complex, that regulates, in association with LYRM4, the stability and the cysteine desulfurase activity of NFS1 and participates in the [2Fe-2S] clusters assembly on the scaffolding protein ISCU. The core iron-sulfur cluster (ISC) assembly complex is involved in the de novo synthesis of a [2Fe-2S] cluster, the first step of the mitochondrial iron-sulfur protein biogenesis. This process is initiated by the cysteine desulfurase complex (NFS1:LYRM4:NDUFAB1) that produces persulfide which is delivered on the scaffold protein ISCU in a FXN-dependent manner. Then this complex is stabilized by FDX2 which provides reducing equivalents to accomplish the [2Fe-2S] cluster assembly. Finally, the [2Fe-2S] cluster is transferred from ISCU to chaperone proteins, including HSCB, HSPA9 and GLRX5. In Gorilla gorilla gorilla (Western lowland gorilla), this protein is Acyl carrier protein, mitochondrial.